The chain runs to 202 residues: Tetranectin (202 aa).

Residues 1 to 21 (MELWGAYLLLCLFSLLTQVTT) form the signal peptide. A glycan (O-linked (GalNAc...) threonine) is linked at Thr-25. 3 cysteine pairs are disulfide-bonded: Cys-71-Cys-81, Cys-98-Cys-197, and Cys-173-Cys-189. Residues 77–198 (VHMKCFLAFT…CRDQLPYICQ (122 aa)) enclose the C-type lectin domain.

Homotrimer. As to expression, found in plasma.

It localises to the secreted. In terms of biological role, tetranectin binds to plasminogen and to isolated kringle 4. May be involved in the packaging of molecules destined for exocytosis. Plays a role in retinal function. The protein is Tetranectin (CLEC3B) of Homo sapiens (Human).